A 136-amino-acid polypeptide reads, in one-letter code: Histone H3.3 (136 aa).

A disordered region spans residues 1 to 45 (MARTKQTARKSTGGKAPRKQLASKAARKAAPATGGVKKPHRYRPP). Lys5 bears the N6,N6,N6-trimethyllysine; alternate mark. The residue at position 5 (Lys5) is an N6,N6-dimethyllysine; alternate. Residues Lys5 and Lys10 each carry the N6-methyllysine; alternate modification. Lys10 is subject to N6-acetyllysine; alternate. Ser11 bears the Phosphoserine mark. Lys15 carries the N6,N6-dimethyllysine; alternate modification. N6-acetyllysine; alternate occurs at positions 15, 19, 24, 28, and 37. N6-methyllysine; alternate occurs at positions 19, 24, 28, and 37. A compositionally biased stretch (low complexity) spans 19–32 (KQLASKAARKAAPA). An N6,N6,N6-trimethyllysine; alternate mark is found at Lys28 and Lys37. 2 positions are modified to N6,N6-dimethyllysine; alternate: Lys28 and Lys37. 2 positions are modified to N6-acetyllysine: Lys57 and Lys65. At Lys80 the chain carries N6,N6,N6-trimethyllysine; alternate. Lys80 bears the N6,N6-dimethyllysine; alternate mark. Position 80 is an N6-methyllysine; alternate (Lys80). Lys123 carries the post-translational modification N6-acetyllysine.

Belongs to the histone H3 family. As to quaternary structure, the nucleosome is a histone octamer containing two molecules each of H2A, H2B, H3 and H4 assembled in one H3-H4 heterotetramer and two H2A-H2B heterodimers. The octamer wraps approximately 147 bp of DNA. In terms of processing, phosphorylated by ark1 to form H3S10ph in a cell cycle-dependent manner during mitosis and meiosis. H3S10ph is also formed by ssp2, promotes subsequent H3K14ac formation by gcn5, and is required for transcriptional activation through TBP recruitment to the promoters. Dephosphorylation is performed by sds21. Mono-, di- and trimethylated by the COMPASS complex to form H3K4me1/2/3. H3K4me activates gene expression by regulating transcription elongation and plays a role in telomere length maintenance. H3K4me enrichment correlates with transcription levels, and occurs in a 5' to 3' gradient with H3K4me3 enrichment at the 5'-end of genes, shifting to H3K4me2 and then H3K4me1. Methylated by clr4 to form H3K9me1. H3K9me1 represents a specific tag for epigenetic transcriptional repression by recruiting swi6/HP1 to methylated histones. Targeting to histone probably involves clr3 and rik1. Essential for silencing of centromeres and directional switching of the mating type. Methylated by set2 to form H3K36me. H3K36me represses gene expression. Methylated by dot1 to form H3K79me. H3K79me is required for association of SIR proteins with telomeric regions and for telomeric silencing. The COMPASS-mediated formation of H3K4me2/3 and the dot1-mediated formation of H3K79me require H2BK123ub1. Post-translationally, acetylation of histone H3 leads to transcriptional activation. H3K14ac formation by gcn5 is promoted by H3S10ph. H3K14ac can also be formed by esa1. H3K56ac formation occurs predominantly in newly synthesized H3 molecules during G1, S and G2/M of the cell cycle and may be involved in DNA repair. Acetylation at Lys-123 (H3K122ac) plays a central role in chromatin structure: localizes at the surface of the histone octamer and stimulates transcription, possibly by promoting nucleosome instability.

It localises to the nucleus. Its subcellular location is the chromosome. Its function is as follows. Core component of nucleosome. Nucleosomes wrap and compact DNA into chromatin, limiting DNA accessibility to the cellular machineries which require DNA as a template. Histones thereby play a central role in transcription regulation, DNA repair, DNA replication and chromosomal stability. DNA accessibility is regulated via a complex set of post-translational modifications of histones, also called histone code, and nucleosome remodeling. This is Histone H3.3 (hht3) from Schizosaccharomyces pombe (strain 972 / ATCC 24843) (Fission yeast).